Here is a 141-residue protein sequence, read N- to C-terminus: Large ribosomal subunit protein uL11 (141 aa).

Belongs to the universal ribosomal protein uL11 family. As to quaternary structure, part of the ribosomal stalk of the 50S ribosomal subunit. Interacts with L10 and the large rRNA to form the base of the stalk. L10 forms an elongated spine to which L12 dimers bind in a sequential fashion forming a multimeric L10(L12)X complex. One or more lysine residues are methylated.

Forms part of the ribosomal stalk which helps the ribosome interact with GTP-bound translation factors. This Chlorobium phaeobacteroides (strain DSM 266 / SMG 266 / 2430) protein is Large ribosomal subunit protein uL11.